We begin with the raw amino-acid sequence, 324 residues long: Antihemorrhagic factor cMSF (324 aa).

A signal peptide spans 1 to 19; it reads MHFLVALVLLGQIIGSTLS. 2 Cystatin fetuin-A-type domains span residues 22 to 130 and 141 to 254; these read VRGD…VKCH and RNCL…SDCV. Residues 23–25 carry the Cell attachment site motif; sequence RGD. 7 disulfides stabilise this stretch: C28-C315, C85-C96, C110-C129, C143-C146, C205-C217, C230-C253, and C287-C291. A glycan (N-linked (GlcNAc...) asparagine) is linked at N204. N282 is a glycosylation site (N-linked (GlcNAc...) asparagine).

As to quaternary structure, homodimer. As to expression, expressed by the liver.

It is found in the secreted. Suppress hemorrhage induced by metalloproteinases from the same venom (brevilysin-H3, -H4, -H6) and from habu venom (metalloproteinases HR1A and HR1B). The non-hemorrhagic brevilysin-L4 is not inhibited by cMSF. Does not inhibit serine and cysteine proteases such as trypsin, chymotrypsin, thermolysin, and papain. The inhibition may occur by formation of a non-covalent complex between this protein and the proteinases at their metalloproteinase domains. This chain is Antihemorrhagic factor cMSF, found in Gloydius brevicauda (Korean slamosa snake).